The chain runs to 83 residues: MRFIILGVLFIAVASMILSNGVMAQSRDFSISEREIVASLAKQLLRVARMGYVPEGDLPRKRNAELINSLLGVPRVMSDAGRR.

The first 24 residues, 1 to 24, serve as a signal peptide directing secretion; the sequence is MRFIILGVLFIAVASMILSNGVMA. Position 80 is an alanine amide (A80).

Belongs to the arthropod PDH family. As to expression, strongly expressed in eyestalk tissue and cerebral ganglia (at protein level).

The protein localises to the secreted. The pigment-dispersing hormone causes the migration of the distal retinal pigment into the proximal end of the pigment chromatophore cells and thus decreases the amount of light entering the retinulas. May also function as a neurotransmitter and/or neuromodulator. This Eurydice pulchra (Speckled sea louse) protein is Pigment-dispersing hormone peptides.